We begin with the raw amino-acid sequence, 345 residues long: Ferrochelatase (345 aa).

Fe cation is bound by residues histidine 215 and glutamate 296.

Belongs to the ferrochelatase family.

The protein localises to the cytoplasm. It catalyses the reaction heme b + 2 H(+) = protoporphyrin IX + Fe(2+). It functions in the pathway porphyrin-containing compound metabolism; protoheme biosynthesis; protoheme from protoporphyrin-IX: step 1/1. In terms of biological role, catalyzes the ferrous insertion into protoporphyrin IX. The sequence is that of Ferrochelatase from Rhodopseudomonas palustris (strain ATCC BAA-98 / CGA009).